We begin with the raw amino-acid sequence, 240 residues long: Ribosomal RNA large subunit methyltransferase E (240 aa).

Residues 1–20 (MSKAGGNKGGSRTGGRGGAG) are compositionally biased toward gly residues. The tract at residues 1-40 (MSKAGGNKGGSRTGGRGGAGSSNLHVRVKKKAGTTKESSR) is disordered. S-adenosyl-L-methionine contacts are provided by Gly-92, Trp-94, Asp-115, Asp-131, and Asp-155. Lys-195 serves as the catalytic Proton acceptor.

It belongs to the class I-like SAM-binding methyltransferase superfamily. RNA methyltransferase RlmE family.

Its subcellular location is the cytoplasm. The catalysed reaction is uridine(2552) in 23S rRNA + S-adenosyl-L-methionine = 2'-O-methyluridine(2552) in 23S rRNA + S-adenosyl-L-homocysteine + H(+). Its function is as follows. Specifically methylates the uridine in position 2552 of 23S rRNA at the 2'-O position of the ribose in the fully assembled 50S ribosomal subunit. The polypeptide is Ribosomal RNA large subunit methyltransferase E (Brucella ovis (strain ATCC 25840 / 63/290 / NCTC 10512)).